We begin with the raw amino-acid sequence, 271 residues long: 4-hydroxy-tetrahydrodipicolinate reductase (271 aa).

NAD(+)-binding positions include 10-15, Glu-36, 100-102, and 124-127; these read GAGGRM, GTT, and SGNM. The active-site Proton donor/acceptor is the His-157. Residue His-158 participates in (S)-2,3,4,5-tetrahydrodipicolinate binding. The active-site Proton donor is the Lys-161. (S)-2,3,4,5-tetrahydrodipicolinate is bound at residue 167–168; it reads GT.

This sequence belongs to the DapB family.

The protein resides in the cytoplasm. It carries out the reaction (S)-2,3,4,5-tetrahydrodipicolinate + NAD(+) + H2O = (2S,4S)-4-hydroxy-2,3,4,5-tetrahydrodipicolinate + NADH + H(+). The enzyme catalyses (S)-2,3,4,5-tetrahydrodipicolinate + NADP(+) + H2O = (2S,4S)-4-hydroxy-2,3,4,5-tetrahydrodipicolinate + NADPH + H(+). The protein operates within amino-acid biosynthesis; L-lysine biosynthesis via DAP pathway; (S)-tetrahydrodipicolinate from L-aspartate: step 4/4. Catalyzes the conversion of 4-hydroxy-tetrahydrodipicolinate (HTPA) to tetrahydrodipicolinate. The chain is 4-hydroxy-tetrahydrodipicolinate reductase from Rhodopseudomonas palustris (strain HaA2).